Consider the following 307-residue polypeptide: Non-homologous end joining protein Ku (307 aa).

The 169-residue stretch at 11–179 (LSFGLVSIPV…EVRSMKDLNI (169 aa)) folds into the Ku domain. Low complexity-rich tracts occupy residues 257–267 (RGGAKAKPAAA) and 290–307 (ARAP…RARK). Residues 257-307 (RGGAKAKPAAAPRRKAPEPVAGMAEATRARKPAARAPKSPAEAPAKVRARK) form a disordered region.

This sequence belongs to the prokaryotic Ku family. As to quaternary structure, homodimer. Interacts with LigD.

Functionally, with LigD forms a non-homologous end joining (NHEJ) DNA repair enzyme, which repairs dsDNA breaks with reduced fidelity. Binds linear dsDNA with 5'- and 3'- overhangs but not closed circular dsDNA nor ssDNA. Recruits and stimulates the ligase activity of LigD. The sequence is that of Non-homologous end joining protein Ku from Paraburkholderia phymatum (strain DSM 17167 / CIP 108236 / LMG 21445 / STM815) (Burkholderia phymatum).